Consider the following 451-residue polypeptide: Amino-acid acetyltransferase (451 aa).

The region spanning 305-451 is the N-acetyltransferase domain; it reads EYLREATLDD…RRSMVLMKKL (147 aa).

It belongs to the acetyltransferase family. ArgA subfamily.

The protein resides in the cytoplasm. The enzyme catalyses L-glutamate + acetyl-CoA = N-acetyl-L-glutamate + CoA + H(+). Its pathway is amino-acid biosynthesis; L-arginine biosynthesis; N(2)-acetyl-L-ornithine from L-glutamate: step 1/4. The chain is Amino-acid acetyltransferase (argA) from Ralstonia nicotianae (strain ATCC BAA-1114 / GMI1000) (Ralstonia solanacearum).